The sequence spans 531 residues: Acid-sensing ion channel 3 (531 aa).

Residues 1–43 (MKPTSGPEEARRPASDIRVFASNCSMHGLGHVFGPGSLSLRRG) are Cytoplasmic-facing. Residues 44–61 (MWAAAVVLSVATFLYQVA) form a helical membrane-spanning segment. Over 62–441 (ERVRYYREFH…SELLGDIGGQ (380 aa)) the chain is Extracellular. 7 cysteine pairs are disulfide-bonded: C92-C186, C164-C171, C282-C370, C315-C366, C319-C364, C328-C350, and C330-C342. Residue N175 is glycosylated (N-linked (GlcNAc...) asparagine). Residues 285–307 (ASLNPNYEPEPSDPLGSPSPSPS) are disordered. N398 carries N-linked (GlcNAc...) asparagine glycosylation. Residues 442-460 (MGLFIGASLLTILEILDYL) form a helical membrane-spanning segment. A GAS motif; ion selectivity filter motif is present at residues 447-449 (GAS). Topologically, residues 461–531 (CEVFRDKVLG…HRTCYLVTQL (71 aa)) are cytoplasmic. The PDZ-binding motif lies at 528–531 (VTQL).

Belongs to the amiloride-sensitive sodium channel (TC 1.A.6) family. ASIC3 subfamily. In terms of assembly, can form homotrimeric channels. Heterotrimer; forms functional heterotrimers producing channel with different properties. Forms heterotrimers with ASIC2; gives rise to a biphasic current with a sustained current which discriminates poorly between Na(+) and K(+). Interacts with STOM; inhibits ASIC3 acid-evoked current. Interacts with LIN7B (via PDZ domain); increases ASIC3 expression at the plasma membrane. Interacts with MAGI1 (via PDZ domain); probably regulates ASIC3. Interacts with GOPC (via PDZ domain); probably regulates ASIC3. Interacts with DLG4 (via PDZ domain); reduces ASIC3 expression at the plasma membrane. As to expression, expressed by sensory neurons. Strongly expressed in brain, spinal cord, lung, lymph nodes, kidney, pituitary, heart and testis.

The protein localises to the cell membrane. The protein resides in the cytoplasm. The enzyme catalyses Na(+)(in) = Na(+)(out). It catalyses the reaction K(+)(in) = K(+)(out). It carries out the reaction Ca(2+)(in) = Ca(2+)(out). Its activity is regulated as follows. Inhibited by the diuretic drug amiloride. Inhibited by the diuretic drug triamterene. Potentiated by the vertebrate neuropeptide FF (NPFF) and the related FMRFamide. Specifically and reversibly inhibited by the a sea anemone toxin APETx2. Forms pH-gated heterotrimeric sodium channels that act as postsynaptic excitatory receptors in the nervous system. Upon extracellular acidification, these channels generate a biphasic current with a fast inactivating and a slow sustained phase. ASIC3 is more sensitive to protons and gates between closed, open, and desensitized states faster than other ASICs. Displays high selectivity for sodium ions but can also permit the permeation of other cations. As a neuronal acid sensor, probably contributes to mechanoreception, acid nociception, and heat nociception. By forming heterotrimeric channels with ASIC2, generates a biphasic current with a fast inactivating and a slow sustained phase, which in sensory neurons is proposed to mediate the pain induced by acidosis that occurs in ischemic, damaged or inflamed tissues. The protein is Acid-sensing ion channel 3 of Homo sapiens (Human).